Here is a 517-residue protein sequence, read N- to C-terminus: Crotonobetaine/carnitine--CoA ligase (517 aa).

Belongs to the ATP-dependent AMP-binding enzyme family.

It carries out the reaction 4-(trimethylamino)butanoate + ATP + CoA = 4-(trimethylamino)butanoyl-CoA + AMP + diphosphate. The catalysed reaction is crotonobetaine + ATP + CoA = crotonobetainyl-CoA + AMP + diphosphate. The enzyme catalyses (R)-carnitine + ATP + CoA = (R)-carnitinyl-CoA + AMP + diphosphate. It functions in the pathway amine and polyamine metabolism; carnitine metabolism. In terms of biological role, catalyzes the transfer of CoA to carnitine, generating the initial carnitinyl-CoA needed for the CaiB reaction cycle. Also has activity toward crotonobetaine and gamma-butyrobetaine. This chain is Crotonobetaine/carnitine--CoA ligase, found in Citrobacter koseri (strain ATCC BAA-895 / CDC 4225-83 / SGSC4696).